A 481-amino-acid chain; its full sequence is Probable cytosol aminopeptidase (481 aa).

Positions 247 and 252 each coordinate Mn(2+). K259 is an active-site residue. 3 residues coordinate Mn(2+): D270, D329, and E331. R333 is an active-site residue.

Belongs to the peptidase M17 family. Mn(2+) serves as cofactor.

The protein resides in the cytoplasm. It catalyses the reaction Release of an N-terminal amino acid, Xaa-|-Yaa-, in which Xaa is preferably Leu, but may be other amino acids including Pro although not Arg or Lys, and Yaa may be Pro. Amino acid amides and methyl esters are also readily hydrolyzed, but rates on arylamides are exceedingly low.. The catalysed reaction is Release of an N-terminal amino acid, preferentially leucine, but not glutamic or aspartic acids.. Presumably involved in the processing and regular turnover of intracellular proteins. Catalyzes the removal of unsubstituted N-terminal amino acids from various peptides. This chain is Probable cytosol aminopeptidase, found in Clostridium tetani (strain Massachusetts / E88).